Reading from the N-terminus, the 129-residue chain is Small ribosomal subunit protein uS11 (129 aa).

It belongs to the universal ribosomal protein uS11 family. In terms of assembly, part of the 30S ribosomal subunit. Interacts with proteins S7 and S18. Binds to IF-3.

Its function is as follows. Located on the platform of the 30S subunit, it bridges several disparate RNA helices of the 16S rRNA. Forms part of the Shine-Dalgarno cleft in the 70S ribosome. The sequence is that of Small ribosomal subunit protein uS11 from Cereibacter sphaeroides (strain ATCC 17029 / ATH 2.4.9) (Rhodobacter sphaeroides).